The chain runs to 882 residues: Exo-beta-D-glucosaminidase ARB_07888 (882 aa).

The first 21 residues, 1 to 21, serve as a signal peptide directing secretion; that stretch reads MWFVFRPAAIPALLLTLGVSA. The propeptide occupies 22–31; the sequence is LSPLRPLVST. N-linked (GlcNAc...) asparagine glycans are attached at residues N86, N200, N234, N237, N287, and N442. D466 serves as the catalytic Proton donor. The active-site Nucleophile is the E538. N688, N773, and N816 each carry an N-linked (GlcNAc...) asparagine glycan.

This sequence belongs to the glycosyl hydrolase 2 family. Monomer.

Its subcellular location is the secreted. The enzyme catalyses Hydrolysis of chitosan or chitosan oligosaccharides to remove successive D-glucosamine residues from the non-reducing termini.. In terms of biological role, hydrolyzes chitosan and chitooligosaccharides with retention of anomeric configuration. The chain is Exo-beta-D-glucosaminidase ARB_07888 from Arthroderma benhamiae (strain ATCC MYA-4681 / CBS 112371) (Trichophyton mentagrophytes).